Consider the following 367-residue polypeptide: MRHFDSMEILNELLKFQSITPDDDGAFNYISMILNDFEEINIDKNGVKNVIFRKTFGPGVHICFAGHIDVVKPGIGWDSDPFDPLQKDGFIYARGAQDMKSAVASMICAVSGVQNFNGTISLLLTSDEEGDAVFGTREALKFLQSRGELPDFAVVGEPTCETVFGDTIKVGRRGSINGILRINGIQGHVAYPNKCVNPVHILASKFANFAGHDFDNGNDFFEPSKLVVVDIRGGMQVCNVTPSDVSVMFNVRNSNLTDANDIKNFINDLYKDCDFDLNLKVSSNPFLTDKNSKIVQKLSQSVQKISGVCPVFTTGGGTSDARYFAEFNVDVAEFGVINDRLHAVNERVSVNEVQKLTEIYKDLIENF.

His67 lines the Zn(2+) pocket. Asp69 is an active-site residue. Asp98 contacts Zn(2+). The Proton acceptor role is filled by Glu128. 3 residues coordinate Zn(2+): Glu129, Glu157, and His342.

It belongs to the peptidase M20A family. DapE subfamily. Homodimer. Zn(2+) serves as cofactor. It depends on Co(2+) as a cofactor.

The enzyme catalyses N-succinyl-(2S,6S)-2,6-diaminopimelate + H2O = (2S,6S)-2,6-diaminopimelate + succinate. It functions in the pathway amino-acid biosynthesis; L-lysine biosynthesis via DAP pathway; LL-2,6-diaminopimelate from (S)-tetrahydrodipicolinate (succinylase route): step 3/3. Its function is as follows. Catalyzes the hydrolysis of N-succinyl-L,L-diaminopimelic acid (SDAP), forming succinate and LL-2,6-diaminopimelate (DAP), an intermediate involved in the bacterial biosynthesis of lysine and meso-diaminopimelic acid, an essential component of bacterial cell walls. The protein is Succinyl-diaminopimelate desuccinylase of Campylobacter hominis (strain ATCC BAA-381 / DSM 21671 / CCUG 45161 / LMG 19568 / NCTC 13146 / CH001A).